The following is a 43-amino-acid chain: Hemolysin H1U (43 aa).

Methionine 1 is subject to N-formylmethionine.

It belongs to the staphylococcal hemolytic protein family.

The protein localises to the secreted. Functionally, virulence factor. Causes hemolysis of erythrocytes. Acts synergistically with beta-hemolysins from S.aureus ATCC 25923. Cytotoxic towards human dermal fibroblasts. In Staphylococcus ureilyticus (Staphylococcus cohnii subsp. urealyticus), this protein is Hemolysin H1U.